Here is a 67-residue protein sequence, read N- to C-terminus: MMSTLVVLLTICLLMLPLTARQLDADQLADQLAERMEDISADQNRWFDPVKRCCMRPICMCPCCVNG.

Residues 1 to 20 form the signal peptide; that stretch reads MMSTLVVLLTICLLMLPLTA. A propeptide spanning residues 21-52 is cleaved from the precursor; sequence RQLDADQLADQLAERMEDISADQNRWFDPVKR. Disulfide bonds link Cys53-Cys63, Cys54-Cys61, and Cys59-Cys64.

This sequence belongs to the conotoxin M superfamily. As to expression, expressed by the venom duct.

The protein resides in the secreted. In terms of biological role, probable neurotoxin. The protein is Conotoxin Im3.1 of Conus imperialis (Imperial cone).